We begin with the raw amino-acid sequence, 247 residues long: 6-carboxyhexanoate--CoA ligase (247 aa).

It belongs to the BioW family. As to quaternary structure, homodimer. Mg(2+) serves as cofactor.

The enzyme catalyses heptanedioate + ATP + CoA = 6-carboxyhexanoyl-CoA + AMP + diphosphate. It functions in the pathway metabolic intermediate metabolism; pimeloyl-CoA biosynthesis; pimeloyl-CoA from pimelate: step 1/1. Functionally, catalyzes the transformation of pimelate into pimeloyl-CoA with concomitant hydrolysis of ATP to AMP. The protein is 6-carboxyhexanoate--CoA ligase of Persephonella marina (strain DSM 14350 / EX-H1).